Reading from the N-terminus, the 148-residue chain is Ponticulin-like protein D (148 aa).

The N-terminal stretch at 1–20 is a signal peptide; the sequence is MLLNKSLLLLVAFVFAIVSA. N-linked (GlcNAc...) asparagine glycosylation occurs at N67. D125 carries the GPI-like-anchor amidated aspartate lipid modification. A propeptide spans 126-148 (removed in mature form); that stretch reads SSAAATMIASFSAILIALLFALL.

Belongs to the ponticulin family. Post-translationally, the GPI-like-anchor contains a phosphoceramide group, rather than a phosphatidyl group.

The protein resides in the cell membrane. The polypeptide is Ponticulin-like protein D (ponD) (Dictyostelium discoideum (Social amoeba)).